The following is a 551-amino-acid chain: Protein GPR107 (551 aa).

Positions 1–33 are cleaved as a signal peptide; the sequence is MAVPVPLGRFGSFCLRLLRLLALLELLVHPVLG. The Extracellular portion of the chain corresponds to 40–262; that stretch reads LKDDVRHKVH…YLSAGEIPLP (223 aa). N-linked (GlcNAc...) asparagine glycosylation is found at Asn-64 and Asn-209. The cysteines at positions 106 and 226 are disulfide-linked. Residues 263-283 form a helical membrane-spanning segment; it reads KLYVSMALFFFLSGTIWIHIL. Residues 284 to 292 are Cytoplasmic-facing; the sequence is RKRRNDVFK. A helical membrane pass occupies residues 293-313; it reads IHWLMAALPFTKSLSLVFHAI. Residues 314 to 336 are Extracellular-facing; the sequence is DYHYISSQGFPIEGWAVVYYITH. The helical transmembrane segment at 337 to 357 threads the bilayer; that stretch reads LLKGALLFITIALIGTGWAFI. The Cytoplasmic portion of the chain corresponds to 358-367; the sequence is KHILSDKDKK. Residues 368–388 form a helical membrane-spanning segment; the sequence is IFMIVIPLQVLANVAYIIIES. Over 389–401 the chain is Extracellular; the sequence is TEEGTTEYGLWKD. The chain crosses the membrane as a helical span at residues 402-422; that stretch reads SLFLVDLLCCGAILFPVVWSI. Over 423-449 the chain is Cytoplasmic; the sequence is RHLQEASATDGKAAINLAKLRLFRHYY. A helical membrane pass occupies residues 450–470; the sequence is VLIVCYIYFTRIIAFLLKFAV. At 471–475 the chain is on the extracellular side; it reads PFQWK. A helical membrane pass occupies residues 476–495; that stretch reads WLYQLLDETATLVFFVLTGY. Residues 496 to 551 lie on the Cytoplasmic side of the membrane; that stretch reads KFRPASDNPYLQLSQEDDDLEMESVVTTSGVMENMKKVKKVSNGAVEPQGSWEGTA. Ser-537 carries the phosphoserine modification.

It belongs to the LU7TM family. Cleaved by FURIN to yield two fragments that remain associated via a disulfide bond.

It is found in the cell membrane. Its subcellular location is the golgi apparatus. It localises to the trans-Golgi network membrane. In terms of biological role, has been proposed to act as a receptor for neuronostatin, a peptide derived from the somatostatin/SST precursor. Involved in blood sugar regulation through the induction of glucagon in response to low glucose. This is Protein GPR107 (Gpr107) from Mus musculus (Mouse).